A 678-amino-acid polypeptide reads, in one-letter code: uncharacterized protein (678 aa).

2 disordered regions span residues 123 to 156 and 381 to 417; these read TPLSEDRKPTSNNEEEDDADEAKSSNADSSTDSV and TETTETEGVDKEDSDKASSVQGNEDEVPDTASETEHS.

It localises to the cytoplasm. This is an uncharacterized protein from Schizosaccharomyces pombe (strain 972 / ATCC 24843) (Fission yeast).